The primary structure comprises 394 residues: MAKAKFERSKPHVNVGTIGHVDHGKTTLTAAISHVLAKTYGGEAKDFSQIDNAPEERERGITINTSHIEYDTPSRHYAHVDCPGHADYVKNMITGAAQMDGAILVVASTDGPMPQTREHILLSRQVGVPFIIVFMNKCDMVDDAELLELVEMEVRELLSEYDFPGDDLPVIQGSALKALEGEPEWEAKILELAAALDSYIPEPERDIDKPFLMPIEDVFSISGRGTVVTGRVERGIVRVGDEVEIVGIRTTTKTTCTGVEMFRKLLDEGRAGENCGILLRGTKRDDVERGQVLSKPGSINPHTTFESEVYVLSKEEGGRHTPFFKGYRPQFYFRTTDVTGTIELPEGVEMVMPGDNIKMKVTLICPIAMDEGLRFAIREGGRTVGAGVVAKIFA.

Residues 10–204 (KPHVNVGTIG…ALDSYIPEPE (195 aa)) enclose the tr-type G domain. The interval 19 to 26 (GHVDHGKT) is G1. 19–26 (GHVDHGKT) is a binding site for GTP. A Mg(2+)-binding site is contributed by Thr26. The segment at 60–64 (GITIN) is G2. Positions 81 to 84 (DCPG) are G3. GTP contacts are provided by residues 81–85 (DCPGH) and 136–139 (NKCD). The segment at 136–139 (NKCD) is G4. The segment at 174 to 176 (SAL) is G5.

The protein belongs to the TRAFAC class translation factor GTPase superfamily. Classic translation factor GTPase family. EF-Tu/EF-1A subfamily. Monomer.

It localises to the cytoplasm. The catalysed reaction is GTP + H2O = GDP + phosphate + H(+). Functionally, GTP hydrolase that promotes the GTP-dependent binding of aminoacyl-tRNA to the A-site of ribosomes during protein biosynthesis. The chain is Elongation factor Tu 1 from Shewanella oneidensis (strain ATCC 700550 / JCM 31522 / CIP 106686 / LMG 19005 / NCIMB 14063 / MR-1).